The sequence spans 591 residues: General transcription and DNA repair factor IIH subunit TFB1-1 (591 aa).

2 consecutive BSD domains span residues 112–166 (STSS…GKDS) and 191–243 (RTNR…YLYS).

Belongs to the TFB1 family. As to quaternary structure, component of the 7-subunit TFIIH core complex composed of XPB, XPD, TFB1/GTF2H1, GTF2H2/P44, TFB4/GTF2H3, TFB2/GTF2H4 and TFB5/GTF2H5, which is active in NER. The core complex associates with the 3-subunit CDK-activating kinase (CAK) module composed of CYCH1/cyclin H1, CDKD and MAT1/At4g30820 to form the 10-subunit holoenzyme (holo-TFIIH) active in transcription.

The protein localises to the nucleus. Its function is as follows. Component of the general transcription and DNA repair factor IIH (TFIIH) core complex, which is involved in general and transcription-coupled nucleotide excision repair (NER) of damaged DNA and, when complexed to CAK, in RNA transcription by RNA polymerase II. In NER, TFIIH acts by opening DNA around the lesion to allow the excision of the damaged oligonucleotide and its replacement by a new DNA fragment. In transcription, TFIIH has an essential role in transcription initiation. When the pre-initiation complex (PIC) has been established, TFIIH is required for promoter opening and promoter escape. Phosphorylation of the C-terminal tail (CTD) of the largest subunit of RNA polymerase II by the kinase module CAK controls the initiation of transcription. In Arabidopsis thaliana (Mouse-ear cress), this protein is General transcription and DNA repair factor IIH subunit TFB1-1.